Reading from the N-terminus, the 235-residue chain is tRNA pseudouridine synthase B (235 aa).

Aspartate 45 (nucleophile) is an active-site residue.

It belongs to the pseudouridine synthase TruB family. Type 1 subfamily.

The enzyme catalyses uridine(55) in tRNA = pseudouridine(55) in tRNA. Functionally, responsible for synthesis of pseudouridine from uracil-55 in the psi GC loop of transfer RNAs. The chain is tRNA pseudouridine synthase B from Chlamydia abortus (strain DSM 27085 / S26/3) (Chlamydophila abortus).